We begin with the raw amino-acid sequence, 194 residues long: dCTP deaminase (194 aa).

Residues 110 to 115 (RSSLAR), Asp128, 136 to 138 (VLE), Tyr171, Lys178, and Gln182 each bind dCTP. Glu138 (proton donor/acceptor) is an active-site residue. Positions 174–194 (RKSSKYKDQQEAVASRISQDK) are disordered.

The protein belongs to the dCTP deaminase family. Homotrimer.

It catalyses the reaction dCTP + H2O + H(+) = dUTP + NH4(+). The protein operates within pyrimidine metabolism; dUMP biosynthesis; dUMP from dCTP (dUTP route): step 1/2. Catalyzes the deamination of dCTP to dUTP. The sequence is that of dCTP deaminase from Shewanella frigidimarina (strain NCIMB 400).